The primary structure comprises 247 residues: ATP synthase subunit a, chloroplastic (247 aa).

5 helical membrane-spanning segments follow: residues 38–58 (QVLI…TIAV), 95–115 (VPFI…GALL), 134–154 (INTT…AGLT), 199–219 (LVVV…VMFL), and 220–240 (GLFT…AYIG).

The protein belongs to the ATPase A chain family. In terms of assembly, F-type ATPases have 2 components, CF(1) - the catalytic core - and CF(0) - the membrane proton channel. CF(1) has five subunits: alpha(3), beta(3), gamma(1), delta(1), epsilon(1). CF(0) has four main subunits: a, b, b' and c.

It is found in the plastid. The protein localises to the chloroplast thylakoid membrane. Functionally, key component of the proton channel; it plays a direct role in the translocation of protons across the membrane. This chain is ATP synthase subunit a, chloroplastic, found in Buxus microphylla (Littleleaf boxwood).